A 36-amino-acid chain; its full sequence is U-limacoditoxin(7)-Dv63 (36 aa).

The N-terminal stretch at 1 to 19 (MFKPRVILLITIIAVFSEF) is a signal peptide.

Belongs to the limacoditoxin-7 family. Expressed by the venom secretory cell of the spine. The spine is a cuticular structure containing a single large nucleated venom-secreting cell at its base. It is an independent unit capable of producing, storing and injecting venom. On the back of D.vulnerans caterpillars, spines are grouped together by 50 to 100 to form scoli, of which there are eight in D.vulnerans.

Its subcellular location is the secreted. Peptide with insecticidal and antiparasitic activities. Induces irreversible paralysis in D.melanogaster when tested at high doses. It shows a moderate antiparasitic activity against the major pathogenic nematode of ruminants (H.contortus, EC(50)=41.3 uM). Does not show antimicrobial activities. Does not induce increase in intracellular calcium in mouse DRG neurons, suggesting that it does not induce pain. In Doratifera vulnerans (Mottled cup moth), this protein is U-limacoditoxin(7)-Dv63.